The primary structure comprises 705 residues: Elongation factor G (705 aa).

Residues V8–K289 form the tr-type G domain. GTP contacts are provided by residues A17–T24, D88–H92, and N142–D145.

Belongs to the TRAFAC class translation factor GTPase superfamily. Classic translation factor GTPase family. EF-G/EF-2 subfamily.

The protein resides in the cytoplasm. Its function is as follows. Catalyzes the GTP-dependent ribosomal translocation step during translation elongation. During this step, the ribosome changes from the pre-translocational (PRE) to the post-translocational (POST) state as the newly formed A-site-bound peptidyl-tRNA and P-site-bound deacylated tRNA move to the P and E sites, respectively. Catalyzes the coordinated movement of the two tRNA molecules, the mRNA and conformational changes in the ribosome. This chain is Elongation factor G, found in Wigglesworthia glossinidia brevipalpis.